We begin with the raw amino-acid sequence, 501 residues long: GMP synthase [glutamine-hydrolyzing] (501 aa).

Residues 1–185 enclose the Glutamine amidotransferase type-1 domain; sequence MVLVVDYGSQ…LFNVCKLEKN (185 aa). C75 acts as the Nucleophile in catalysis. Active-site residues include H159 and E161. Residues 186-376 form the GMPS ATP-PPase domain; the sequence is WKIGDLVEEK…LGIPDRIINR (191 aa). 213-219 contributes to the ATP binding site; it reads SGGVDSS.

In terms of assembly, homodimer.

The enzyme catalyses XMP + L-glutamine + ATP + H2O = GMP + L-glutamate + AMP + diphosphate + 2 H(+). It functions in the pathway purine metabolism; GMP biosynthesis; GMP from XMP (L-Gln route): step 1/1. Its function is as follows. Catalyzes the synthesis of GMP from XMP. The chain is GMP synthase [glutamine-hydrolyzing] from Thermotoga petrophila (strain ATCC BAA-488 / DSM 13995 / JCM 10881 / RKU-1).